The primary structure comprises 64 residues: Large ribosomal subunit protein eL37 (64 aa).

Zn(2+) contacts are provided by Cys20, Cys23, Cys35, and Cys38. The C4-type zinc-finger motif lies at 20-38 (CRRCGRRAYHVRKKACAAC).

It belongs to the eukaryotic ribosomal protein eL37 family. Requires Zn(2+) as cofactor.

Its function is as follows. Binds to the 23S rRNA. The chain is Large ribosomal subunit protein eL37 from Methanococcus vannielii (strain ATCC 35089 / DSM 1224 / JCM 13029 / OCM 148 / SB).